The following is a 478-amino-acid chain: Sphingomyelin synthase-related protein 1 (478 aa).

Low complexity predominate over residues 1 to 22; sequence MPAGSRAGSRLRSGSLPRPSRL. Positions 1 to 65 are disordered; it reads MPAGSRAGSR…TAEEVEKEMA (65 aa). Positions 75-141 constitute an SAM domain; it reads WTTKHVAVWL…MLSVRKLQKI (67 aa). The next 6 helical transmembrane spans lie at 216 to 236, 264 to 284, 295 to 315, 341 to 361, 385 to 405, and 410 to 430; these read ILSC…MVIV, FSMT…VLLL, LCSL…VTSL, AIWS…DYMF, FLHT…LAAH, and IDVF…HTLA. At 431–478 the chain is on the cytoplasmic side; it reads NTRAYHQSRRARIWFPMFSFFECNVNGTVPNEYCWPFSKPAIMKRLIG.

The protein belongs to the sphingomyelin synthase family. In terms of tissue distribution, expressed ubiquitously with highest levels in macrophages and testis.

The protein resides in the endoplasmic reticulum membrane. It carries out the reaction an N-acylsphing-4-enine + a 1,2-diacyl-sn-glycero-3-phosphoethanolamine = an N-acylsphing-4-enine 1-phosphoethanolamine + a 1,2-diacyl-sn-glycerol. It catalyses the reaction an N-acylsphinganine + a 1,2-diacyl-sn-glycero-3-phosphoethanolamine = an N-acylsphinganine-1-phosphoethanolamine + a 1,2-diacyl-sn-glycerol. The enzyme catalyses an N-acyl-(4R)-4-hydroxysphinganine + a 1,2-diacyl-sn-glycero-3-phosphoethanolamine = an N-acyl-(4R)-4-hydroxysphinganine-1-phosphoethanolamine + a 1,2-diacyl-sn-glycerol. The catalysed reaction is N-hexadecanoylsphinganine + a 1,2-diacyl-sn-glycero-3-phosphoethanolamine = N-hexadecanoyl-sphinganine-1-phosphoethanolamine + a 1,2-diacyl-sn-glycerol. It carries out the reaction N-hexadecanoyl-(4R)-hydroxysphinganine + a 1,2-diacyl-sn-glycero-3-phosphoethanolamine = N-hexadecanoyl-(4R)-hydroxysphinganine-1-phosphoethanolamine + a 1,2-diacyl-sn-glycerol. It participates in sphingolipid metabolism. Synthesizes sphingolipids through transfer of a phosphatidyl head group from a glycerophospholipid on to the primary hydroxyl of a ceramide in the lumen of the endoplasmic reticulum. Catalyzes the synthesis of ceramide phosphoethanolamines (CPEs) (such as N-acylsphing-4-enine 1-phosphoethanolamine) by transferring phosphoethanolamine head group, which is smaller and more hydrophilic than the phosphocholine (PC) headgroup transferred in the canonical sphingomyelin synthesis (SMS) reaction by SMS1 or SMS2, from a phosphatidylethanolamine (1,2-diacyl-sn-glycero-3-phosphoethanolamine, PE) to a ceramide (such as N-acylsphing-4-enine). The larger PC prevents an efficient fit in the enzyme's catalytic pocket, leading to little or no SMS activity. In vitro, in the absence of ceramide, it has PLC activity with preference for phosphatidylinositol and phosphatidic acid, but also hydrolyzes phosphatidylethanolamine. This Mus musculus (Mouse) protein is Sphingomyelin synthase-related protein 1.